Here is a 271-residue protein sequence, read N- to C-terminus: Phosphatidylinositol transfer protein alpha isoform (271 aa).

A 1,2-diacyl-sn-glycero-3-phospho-(1D-myo-inositol) is bound by residues Thr59, Lys61, Glu86, Asn90, Thr97, and Lys195. Lys216 carries the N6-acetyllysine modification. The span at 251–264 (TKRQLDEMRQKDPV) shows a compositional bias: basic and acidic residues. Residues 251–271 (TKRQLDEMRQKDPVKGMTADD) are disordered.

The protein belongs to the PtdIns transfer protein family. PI transfer class I subfamily. In terms of processing, phosphorylated by PKC in a calcium and phosphatidylserine-dependent manner.

The protein resides in the cytoplasm. Its subcellular location is the nucleus. The catalysed reaction is a 1,2-diacyl-sn-glycero-3-phosphocholine(in) = a 1,2-diacyl-sn-glycero-3-phosphocholine(out). It carries out the reaction a 1,2-diacyl-sn-glycero-3-phospho-(1D-myo-inositol)(in) = a 1,2-diacyl-sn-glycero-3-phospho-(1D-myo-inositol)(out). Functionally, catalyzes the transfer of phosphatidylinositol (PI) and phosphatidylcholine (PC) between membranes. Shows a preference for PI and PC containing shorter saturated or monosaturated acyl chains at the sn-1 and sn-2 positions. Preference order for PC is C16:1 &gt; C16:0 &gt; C18:1 &gt; C18:0 &gt; C20:4 and for PI is C16:1 &gt; C16:0 &gt; C18:1 &gt; C18:0 &gt; C20:4 &gt; C20:3. The chain is Phosphatidylinositol transfer protein alpha isoform (Pitpna) from Mus musculus (Mouse).